Consider the following 72-residue polypeptide: UPF0154 protein BPUM_1692 (72 aa).

A helical membrane pass occupies residues 4–24 (WVVILVGVVALLAGVALGFFI).

It belongs to the UPF0154 family.

It is found in the cell membrane. The polypeptide is UPF0154 protein BPUM_1692 (Bacillus pumilus (strain SAFR-032)).